Consider the following 1117-residue polypeptide: Zinc finger E-box-binding homeobox 1 (1117 aa).

2 disordered regions span residues 1-103 and 122-143; these read MADG…QNHD and APEEDQRQGTPEASSHDENGTP. Low complexity predominate over residues 15–30; sequence PRRNNVTNYNTVVEAN. S31 and S33 each carry phosphoserine. The C2H2-type 1 zinc-finger motif lies at 150–173; the sequence is LTCPYCDRGYKRFTSLKEHIKYRH. Glycyl lysine isopeptide (Lys-Gly) (interchain with G-Cter in SUMO2) cross-links involve residues K166 and K175. C2H2-type zinc fingers lie at residues 180–202 and 220–242; these read FSCSLCSYTFAYRTQLERHMTSH and FKCTECGKAFKYKHHLKEHLRIH. A C2H2-type 4; atypical zinc finger spans residues 248-272; the sequence is YECPNCKKRFSHSGSYSSHISSKKC. Residues 278–307 form a disordered region; sequence VNGRPRSGLKTSQCSSPSLSTSPGSPTRPQ. A Glycyl lysine isopeptide (Lys-Gly) (interchain with G-Cter in SUMO2) cross-link involves residue K287. Residues 288–304 are compositionally biased toward low complexity; the sequence is TSQCSSPSLSTSPGSPT. Phosphoserine occurs at positions 293 and 302. Glycyl lysine isopeptide (Lys-Gly) (interchain with G-Cter in SUMO2) cross-links involve residues K311 and K315. A Glycyl lysine isopeptide (Lys-Gly) (interchain with G-Cter in SUMO); alternate cross-link involves residue K327. A Glycyl lysine isopeptide (Lys-Gly) (interchain with G-Cter in SUMO2); alternate cross-link involves residue K327. Glycyl lysine isopeptide (Lys-Gly) (interchain with G-Cter in SUMO2) cross-links involve residues K419, K473, K484, K495, and K528. 3 disordered regions span residues 476-501, 528-566, and 613-687; these read IPAPTNSCKSEKLPEDLTVKSETDKS, KHYDPECPAQPPPPAPATEKPESSASSAGNGDLSPSQPP, and GQIP…SPLN. The span at 484–501 shows a compositional bias: basic and acidic residues; that stretch reads KSEKLPEDLTVKSETDKS. Residues 559-618 constitute a DNA-binding region (homeobox; atypical); it reads DLSPSQPPLKNLLSLLKAYYALNAQPSTEELSKIADSVNLPLDGVKKWFEKMQAGQIPGQ. A phosphoserine mark is found at S657, S664, S671, and S678. Residues 673–687 show a composition bias toward polar residues; sequence MNGSRSCTSSPSPLN. T680 is modified (phosphothreonine). The residue at position 682 (S682) is a Phosphoserine. A Glycyl lysine isopeptide (Lys-Gly) (interchain with G-Cter in SUMO); alternate cross-link involves residue K752. A Glycyl lysine isopeptide (Lys-Gly) (interchain with G-Cter in SUMO2); alternate cross-link involves residue K752. The tract at residues 834-876 is disordered; sequence PPVKVIQPNGNQDERQDTSSEGVSTVEDQNDSDSTPPKKKTRK. The segment covering 852 to 868 has biased composition (polar residues); it reads SSEGVSTVEDQNDSDST. C2H2-type zinc fingers lie at residues 882-904 and 910-932; these read YACDLCDKIFQKSSSLLRHKYEH and HECGICRKAFKHKHHLIEHMRLH. Residues 938 to 959 form a C2H2-type 7; atypical zinc finger; the sequence is YQCDKCGKRFSHSGSYSQHMNH. The disordered stretch occupies residues 991–1117; the sequence is EHVGARASPS…QLSEEKTNEA (127 aa). Acidic residues-rich tracts occupy residues 1013-1032, 1042-1069, and 1098-1109; these read EEDEDSEKEEEEEDKEMEEL, QGEEEEEEEEEEEEEEEEEEEVEADEAE, and SEMESESESEQL.

Belongs to the delta-EF1/ZFH-1 C2H2-type zinc-finger family. Interacts (via N-terminus) with SMARCA4/BRG1. Ubiquitinated, leading to degradation in a proteasome-dependent manner. Deubiquitinated by USP51, leading to stabilization. In terms of tissue distribution, expressed in the external germinal layer (EGL) and internal granular layer (IGL) of the cerebellum (at protein level).

It localises to the nucleus. Its function is as follows. Acts as a transcriptional repressor. Binds to E-box sequences in the immunoglobulin heavy chain enhancer as well as in the regulatory regions of many other tissue-specific genes. Represses E-cadherin promoter and induces an epithelial-mesenchymal transition (EMT) by recruiting SMARCA4/BRG1. Represses BCL6 transcription in the presence of the corepressor CTBP1. Positively regulates neuronal differentiation. Represses RCOR1 transcription activation during neurogenesis. Represses transcription by binding to the E box (5'-CANNTG-3'). In the absence of TGFB1, acts as a repressor of COL1A2 transcription via binding to the E-box in the upstream enhancer region. Promotes tumorigenicity by repressing stemness-inhibiting microRNAs. This chain is Zinc finger E-box-binding homeobox 1, found in Mus musculus (Mouse).